The sequence spans 144 residues: Deoxyuridine 5'-triphosphate nucleotidohydrolase (144 aa).

Substrate is bound by residues 63–65, Asn76, and 80–82; these read RSG and TVD.

It belongs to the dUTPase family. The cofactor is Mg(2+).

The enzyme catalyses dUTP + H2O = dUMP + diphosphate + H(+). Its pathway is pyrimidine metabolism; dUMP biosynthesis; dUMP from dCTP (dUTP route): step 2/2. In terms of biological role, this enzyme is involved in nucleotide metabolism: it produces dUMP, the immediate precursor of thymidine nucleotides and it decreases the intracellular concentration of dUTP so that uracil cannot be incorporated into DNA. This is Deoxyuridine 5'-triphosphate nucleotidohydrolase from Flavobacterium johnsoniae (strain ATCC 17061 / DSM 2064 / JCM 8514 / BCRC 14874 / CCUG 350202 / NBRC 14942 / NCIMB 11054 / UW101) (Cytophaga johnsonae).